Here is a 265-residue protein sequence, read N- to C-terminus: Undecaprenyl-diphosphatase (265 aa).

Helical transmembrane passes span 1-21, 39-59, 83-103, 114-134, 144-164, 188-208, 218-238, and 244-264; these read MDWF…FLPI, QGLA…MMYY, LKLG…GFLG, ALVI…SDAF, LGVA…IPGT, SFLL…KDLI, MMAL…VFFI, and VGML…LFWL.

This sequence belongs to the UppP family.

The protein localises to the cell inner membrane. The catalysed reaction is di-trans,octa-cis-undecaprenyl diphosphate + H2O = di-trans,octa-cis-undecaprenyl phosphate + phosphate + H(+). Catalyzes the dephosphorylation of undecaprenyl diphosphate (UPP). Confers resistance to bacitracin. The polypeptide is Undecaprenyl-diphosphatase (Alcanivorax borkumensis (strain ATCC 700651 / DSM 11573 / NCIMB 13689 / SK2)).